A 460-amino-acid polypeptide reads, in one-letter code: ATP synthase subunit beta (460 aa).

150–157 (GGAGVGKT) lines the ATP pocket.

It belongs to the ATPase alpha/beta chains family. As to quaternary structure, F-type ATPases have 2 components, CF(1) - the catalytic core - and CF(0) - the membrane proton channel. CF(1) has five subunits: alpha(3), beta(3), gamma(1), delta(1), epsilon(1). CF(0) has three main subunits: a(1), b(2) and c(9-12). The alpha and beta chains form an alternating ring which encloses part of the gamma chain. CF(1) is attached to CF(0) by a central stalk formed by the gamma and epsilon chains, while a peripheral stalk is formed by the delta and b chains.

The protein localises to the cell inner membrane. The enzyme catalyses ATP + H2O + 4 H(+)(in) = ADP + phosphate + 5 H(+)(out). Its function is as follows. Produces ATP from ADP in the presence of a proton gradient across the membrane. The catalytic sites are hosted primarily by the beta subunits. The polypeptide is ATP synthase subunit beta (Yersinia enterocolitica serotype O:8 / biotype 1B (strain NCTC 13174 / 8081)).